Consider the following 28-residue polypeptide: NU-theraphotoxin-Preg1a (28 aa).

Cystine bridges form between cysteine 2/cysteine 19, cysteine 9/cysteine 22, and cysteine 18/cysteine 27.

Expressed by the venom gland.

It localises to the secreted. Its function is as follows. Toxin that acts as an agonist on melanocortin receptors (MC1R, MC3R, MC5R, MC5R). After binding to MC1R, the peptide activates the hMC1R/Gs pathway, but after binding to MC4R, it is not able to activate or antagonize the MC4R/Gs pathway. Inhibits melanocyte stimulating hormone (MSH)-binding to human receptors (Ki=1.8 uM to MC1R, Ki=19.8 uM to MC3R, Ki=7.1 uM to MC4R, Ki=10.0 uM to MC5R). This toxin is structurally unrelated to the natural agonists. The protein is NU-theraphotoxin-Preg1a of Poecilotheria regalis (Indian ornamental tree spider).